The following is a 239-amino-acid chain: Probable septum site-determining protein MinC (239 aa).

It belongs to the MinC family. In terms of assembly, interacts with MinD and FtsZ.

Its function is as follows. Cell division inhibitor that blocks the formation of polar Z ring septums. Rapidly oscillates between the poles of the cell to destabilize FtsZ filaments that have formed before they mature into polar Z rings. Prevents FtsZ polymerization. This is Probable septum site-determining protein MinC from Colwellia psychrerythraea (strain 34H / ATCC BAA-681) (Vibrio psychroerythus).